The sequence spans 417 residues: UDP-N-acetylglucosamine 1-carboxyvinyltransferase (417 aa).

Phosphoenolpyruvate is bound at residue 22 to 23; that stretch reads KN. Arginine 94 contacts UDP-N-acetyl-alpha-D-glucosamine. The Proton donor role is filled by cysteine 118. The residue at position 118 (cysteine 118) is a 2-(S-cysteinyl)pyruvic acid O-phosphothioketal. Residues 123-127, aspartate 306, and isoleucine 328 each bind UDP-N-acetyl-alpha-D-glucosamine; that span reads RPIDQ.

It belongs to the EPSP synthase family. MurA subfamily.

It is found in the cytoplasm. It catalyses the reaction phosphoenolpyruvate + UDP-N-acetyl-alpha-D-glucosamine = UDP-N-acetyl-3-O-(1-carboxyvinyl)-alpha-D-glucosamine + phosphate. It functions in the pathway cell wall biogenesis; peptidoglycan biosynthesis. Cell wall formation. Adds enolpyruvyl to UDP-N-acetylglucosamine. In Clostridium botulinum (strain ATCC 19397 / Type A), this protein is UDP-N-acetylglucosamine 1-carboxyvinyltransferase.